Here is an 81-residue protein sequence, read N- to C-terminus: Trefoil factor 3 (81 aa).

Residues 1-22 (METRAFWTTLLLVLVAGSSCKA) form the signal peptide. The P-type domain maps to 31–74 (SQCMVPANVRVDCGYPTVTSEQCNNRGCCFDSSIPNVPWCFKPL). Disulfide bonds link cysteine 33/cysteine 59, cysteine 43/cysteine 58, and cysteine 53/cysteine 70.

Monomer. Homodimer; disulfide-linked. In terms of tissue distribution, expressed in goblet cells of the intestines, and colon, in paraventricular hypothalamus and supraoptic nuclei. Weakly expressed in gastric epithelial cells (at protein level). Expressed by goblet cells of small and large intestinal epithelia, kidney and stomach. Expressed in the paraventricular hypothalamus, arcuate nucleus and amygdala of the brain. Weakly expressed in gastric epithelial cells.

Its subcellular location is the secreted. The protein localises to the extracellular space. It is found in the extracellular matrix. It localises to the cytoplasm. Its function is as follows. Involved in the maintenance and repair of the intestinal mucosa. Promotes the mobility of epithelial cells in healing processes (motogen). This Rattus norvegicus (Rat) protein is Trefoil factor 3 (Tff3).